The sequence spans 143 residues: MAIERTFSIIKPDAVAKNHIGAIYNRFESAGLKIIASKMVQLSKEQAEGFYAEHSARPFFGALVSFMTSGPVMVQVLEGENAVLANREIMGATNPAEAARGTLRADYAASIDENAVHGSDAVESAAREIAYFFSADEVCPRTR.

ATP is bound by residues K11, F59, R87, T93, R104, and N114. H117 (pros-phosphohistidine intermediate) is an active-site residue.

It belongs to the NDK family. In terms of assembly, homotetramer. The cofactor is Mg(2+).

The protein resides in the cytoplasm. The enzyme catalyses a 2'-deoxyribonucleoside 5'-diphosphate + ATP = a 2'-deoxyribonucleoside 5'-triphosphate + ADP. It catalyses the reaction a ribonucleoside 5'-diphosphate + ATP = a ribonucleoside 5'-triphosphate + ADP. Its function is as follows. Major role in the synthesis of nucleoside triphosphates other than ATP. The ATP gamma phosphate is transferred to the NDP beta phosphate via a ping-pong mechanism, using a phosphorylated active-site intermediate. This Shewanella frigidimarina (strain NCIMB 400) protein is Nucleoside diphosphate kinase.